The sequence spans 353 residues: Sulfate/thiosulfate import ATP-binding protein CysA (353 aa).

The 235-residue stretch at 3-237 folds into the ABC transporter domain; it reads IQVKNIEKHF…PATPFVFDFL (235 aa). 35–42 serves as a coordination point for ATP; that stretch reads GPSGCGKT.

Belongs to the ABC transporter superfamily. Sulfate/tungstate importer (TC 3.A.1.6) family. In terms of assembly, the complex is composed of two ATP-binding proteins (CysA), two transmembrane proteins (CysT and CysW) and a solute-binding protein (CysP).

The protein localises to the cell inner membrane. It catalyses the reaction sulfate(out) + ATP + H2O = sulfate(in) + ADP + phosphate + H(+). The catalysed reaction is thiosulfate(out) + ATP + H2O = thiosulfate(in) + ADP + phosphate + H(+). Part of the ABC transporter complex CysAWTP involved in sulfate/thiosulfate import. Responsible for energy coupling to the transport system. This chain is Sulfate/thiosulfate import ATP-binding protein CysA, found in Acinetobacter baylyi (strain ATCC 33305 / BD413 / ADP1).